An 85-amino-acid chain; its full sequence is Colicin-E8 immunity protein in ColE6 (85 aa).

Belongs to the colicins ColE2/ColE8/ColE9 and pyocins S1/S2 family.

This chain is Colicin-E8 immunity protein in ColE6 (imm), found in Escherichia coli.